Here is a 515-residue protein sequence, read N- to C-terminus: Bifunctional purine biosynthesis protein PurH (515 aa).

An MGS-like domain is found at Met1–Val144.

It belongs to the PurH family.

It carries out the reaction (6R)-10-formyltetrahydrofolate + 5-amino-1-(5-phospho-beta-D-ribosyl)imidazole-4-carboxamide = 5-formamido-1-(5-phospho-D-ribosyl)imidazole-4-carboxamide + (6S)-5,6,7,8-tetrahydrofolate. The catalysed reaction is IMP + H2O = 5-formamido-1-(5-phospho-D-ribosyl)imidazole-4-carboxamide. It participates in purine metabolism; IMP biosynthesis via de novo pathway; 5-formamido-1-(5-phospho-D-ribosyl)imidazole-4-carboxamide from 5-amino-1-(5-phospho-D-ribosyl)imidazole-4-carboxamide (10-formyl THF route): step 1/1. Its pathway is purine metabolism; IMP biosynthesis via de novo pathway; IMP from 5-formamido-1-(5-phospho-D-ribosyl)imidazole-4-carboxamide: step 1/1. The protein is Bifunctional purine biosynthesis protein PurH of Persephonella marina (strain DSM 14350 / EX-H1).